The chain runs to 222 residues: Cytidylate kinase 2 (222 aa).

An ATP-binding site is contributed by Gly7–Thr15.

The protein belongs to the cytidylate kinase family. Type 1 subfamily.

It localises to the cytoplasm. The enzyme catalyses CMP + ATP = CDP + ADP. It catalyses the reaction dCMP + ATP = dCDP + ADP. The sequence is that of Cytidylate kinase 2 from Haemophilus influenzae (strain ATCC 51907 / DSM 11121 / KW20 / Rd).